The following is a 343-amino-acid chain: Dihydroorotase (343 aa).

Zn(2+) is bound by residues His13 and His15. Substrate contacts are provided by residues 15-17 (HLR) and Asn41. Residues Lys99, His136, and His174 each coordinate Zn(2+). The residue at position 99 (Lys99) is an N6-carboxylysine. His136 is a binding site for substrate. Leu219 contacts substrate. Asp247 lines the Zn(2+) pocket. Residue Asp247 is part of the active site. 2 residues coordinate substrate: His251 and Ala263.

This sequence belongs to the metallo-dependent hydrolases superfamily. DHOase family. Class II DHOase subfamily. As to quaternary structure, homodimer. Zn(2+) is required as a cofactor.

It catalyses the reaction (S)-dihydroorotate + H2O = N-carbamoyl-L-aspartate + H(+). Its pathway is pyrimidine metabolism; UMP biosynthesis via de novo pathway; (S)-dihydroorotate from bicarbonate: step 3/3. In terms of biological role, catalyzes the reversible cyclization of carbamoyl aspartate to dihydroorotate. The polypeptide is Dihydroorotase (Shewanella baltica (strain OS223)).